A 400-amino-acid chain; its full sequence is Enoyl-[acyl-carrier-protein] reductase [NADH] (400 aa).

Residues 48-53 (GASTGY), 74-75 (FE), 111-112 (DA), and 139-140 (LA) contribute to the NAD(+) site. Y225 is a substrate binding site. Y235 (proton donor) is an active-site residue. NAD(+) contacts are provided by residues K244 and 273-275 (VVT).

It belongs to the TER reductase family. As to quaternary structure, monomer.

The catalysed reaction is a 2,3-saturated acyl-[ACP] + NAD(+) = a (2E)-enoyl-[ACP] + NADH + H(+). Its pathway is lipid metabolism; fatty acid biosynthesis. Functionally, involved in the final reduction of the elongation cycle of fatty acid synthesis (FAS II). Catalyzes the reduction of a carbon-carbon double bond in an enoyl moiety that is covalently linked to an acyl carrier protein (ACP). This is Enoyl-[acyl-carrier-protein] reductase [NADH] from Burkholderia ambifaria (strain MC40-6).